The primary structure comprises 444 residues: Beta-D-glucosyl crocetin beta-1,6-glucosyltransferase (444 aa).

His-9 acts as the Proton acceptor in catalysis. His-9 lines the an anthocyanidin pocket. Asp-108 (charge relay) is an active-site residue. UDP-alpha-D-glucose is bound by residues Thr-130, Ala-319, Gln-321, His-336, Trp-339, Asn-340, Ser-341, Glu-344, Asp-360, and Gln-361.

The protein belongs to the UDP-glycosyltransferase family. In terms of tissue distribution, ubiquitous.

The catalysed reaction is beta-D-glucosyl crocetin + UDP-alpha-D-glucose = beta-D-gentiobiosyl crocetin + UDP + H(+). It catalyses the reaction bis(beta-D-glucosyl) crocetin + UDP-alpha-D-glucose = beta-D-gentiobiosyl beta-D-glucosyl crocetin + UDP + H(+). The enzyme catalyses beta-D-gentiobiosyl beta-D-glucosyl crocetin + UDP-alpha-D-glucose = bis(beta-D-gentiobiosyl) crocetin + UDP + H(+). Its function is as follows. Glucosyltransferase catalyzing the beta 1-6 glucosylation of the sugar moiety of crocetin glucosyl esters to produce crocetin gentiobiosyl esters. Weak activity toward curcumin glucosides, but no activity with flavonoid glucosides, coumarin glucosides, 4-nitrophenyl glucoside or crocetin. Involved with UGT75L6 in sequential glycosylation of crocetin to crocin (bis(beta-D-gentiobiosyl) crocetin). This is Beta-D-glucosyl crocetin beta-1,6-glucosyltransferase (UGT94E5) from Gardenia jasminoides (Cape jasmine).